Reading from the N-terminus, the 232-residue chain is Large ribosomal subunit protein uL1 (232 aa).

It belongs to the universal ribosomal protein uL1 family. Part of the 50S ribosomal subunit.

Its function is as follows. Binds directly to 23S rRNA. The L1 stalk is quite mobile in the ribosome, and is involved in E site tRNA release. In terms of biological role, protein L1 is also a translational repressor protein, it controls the translation of the L11 operon by binding to its mRNA. This Cereibacter sphaeroides (strain ATCC 17029 / ATH 2.4.9) (Rhodobacter sphaeroides) protein is Large ribosomal subunit protein uL1.